Here is a 280-residue protein sequence, read N- to C-terminus: Putative pyruvate, phosphate dikinase regulatory protein (280 aa).

Residue glycine 152–threonine 159 coordinates ADP.

This sequence belongs to the pyruvate, phosphate/water dikinase regulatory protein family. PDRP subfamily.

The catalysed reaction is N(tele)-phospho-L-histidyl/L-threonyl-[pyruvate, phosphate dikinase] + ADP = N(tele)-phospho-L-histidyl/O-phospho-L-threonyl-[pyruvate, phosphate dikinase] + AMP + H(+). It carries out the reaction N(tele)-phospho-L-histidyl/O-phospho-L-threonyl-[pyruvate, phosphate dikinase] + phosphate + H(+) = N(tele)-phospho-L-histidyl/L-threonyl-[pyruvate, phosphate dikinase] + diphosphate. Its function is as follows. Bifunctional serine/threonine kinase and phosphorylase involved in the regulation of the pyruvate, phosphate dikinase (PPDK) by catalyzing its phosphorylation/dephosphorylation. The protein is Putative pyruvate, phosphate dikinase regulatory protein of Clostridioides difficile (strain 630) (Peptoclostridium difficile).